The sequence spans 784 residues: Rabenosyn-5 (784 aa).

Residue Ala2 is modified to N-acetylalanine. Phosphoserine is present on Ser3. Residues 14–37 form a C2H2-type zinc finger; sequence FLCPLCLKDLQSFYQLHSHYEEEH. The segment at 100–263 is necessary for the correct targeting to endosomes; the sequence is RSHLSDFKKH…HCKDTLLKRE (164 aa). An FYVE-type zinc finger spans residues 157–260; that stretch reads DQDVPFCPDC…CCTHCKDTLL (104 aa). Zn(2+) is bound by residues Cys163, Cys166, Cys179, Cys182, Cys187, and Cys190. Residues 207–224 are compositionally biased toward polar residues; the sequence is KESLSTHTSPSQSPNSVH. Residues 207–241 form a disordered region; the sequence is KESLSTHTSPSQSPNSVHGSRRGSISSMSSVSSVL. A phosphoserine mark is found at Ser215, Ser219, Ser226, and Ser230. A compositionally biased stretch (low complexity) spans 228–240; it reads RGSISSMSSVSSV. Zn(2+) is bound by residues Cys252 and Cys255. The necessary for interaction with RAB4A stretch occupies residues 264–500; that stretch reads QQIDEKEHTP…QLQDEYDQQQ (237 aa). A necessary for interaction with EHD1 region spans residues 264–784; it reads QQIDEKEHTP…TLAKQKGGTD (521 aa). 2 coiled-coil regions span residues 378–414 and 472–531; these read TKEQ…LEER and QAKA…RELE. The segment covering 390–400 has biased composition (basic and acidic residues); the sequence is KEEMERKRAVE. Residues 390–429 are disordered; it reads KEEMERKRAVERQAALESQRRLEERQSGLASRAANGEVAS. Positions 496-515 constitute a UIM domain; the sequence is YDQQQTEKAIELSRRQAEEE. Positions 574–732 are disordered; that stretch reads DLGSSPVPSS…DSDSGPEAEE (159 aa). Residues 579 to 598 are compositionally biased toward polar residues; that stretch reads PVPSSTAPKTPSLSSTQPTR. The interval 627–784 is necessary for interaction with RAB5A; it reads PFDEEDLSSP…TLAKQKGGTD (158 aa). Positions 663 to 673 are enriched in acidic residues; the sequence is PFEEEDEEEEA. Phosphoserine is present on Ser684. Residues 722–732 are compositionally biased toward acidic residues; it reads MDSDSGPEAEE.

As to quaternary structure, interacts with EHD1, RAB4A, RAB5A, RAB14, RAB22A, RAB24 and VPS45. Binds simultaneously to RAB4A and RAB5A in vitro. Interacts with RAB4A and RAB5A that has been activated by GTP binding.

It localises to the cell membrane. It is found in the early endosome membrane. Its function is as follows. Rab4/Rab5 effector protein acting in early endocytic membrane fusion and membrane trafficking of recycling endosomes. Required for endosome fusion either homotypically or with clathrin coated vesicles. Plays a role in the lysosomal trafficking of CTSD/cathepsin D from the Golgi to lysosomes. Also promotes the recycling of transferrin directly from early endosomes to the plasma membrane. Binds phospholipid vesicles containing phosphatidylinositol 3-phosphate (PtdInsP3). Plays a role in the recycling of transferrin receptor to the plasma membrane. This chain is Rabenosyn-5, found in Homo sapiens (Human).